Reading from the N-terminus, the 808-residue chain is Probable E3 ubiquitin-protein ligase MARCHF10 (808 aa).

Disordered regions lie at residues 33–81, 101–268, and 284–415; these read LRRQ…LTEP, QTSV…RKAS, and SRRE…EVGV. A compositionally biased stretch (basic and acidic residues) spans 34–49; sequence RRQEYRRDPNEKKRDQ. A compositionally biased stretch (polar residues) spans 237–249; sequence QAFQGKNSPQVLS. Composition is skewed to basic and acidic residues over residues 330–349 and 379–397; these read KNFEENAENCRGHSSRRSEP and LPDRESATEKDRGGSENAK. The RING-CH-type zinc finger occupies 651 to 721; it reads DSEEEGDLCR…EMCKQGLLVD (71 aa). Positions 659, 662, 677, 679, 687, 690, 711, and 714 each coordinate Zn(2+). A disordered region spans residues 773 to 808; that stretch reads ERERLSRNYPQPRTEENENSELGDGNEGSISQSQVV.

It catalyses the reaction S-ubiquitinyl-[E2 ubiquitin-conjugating enzyme]-L-cysteine + [acceptor protein]-L-lysine = [E2 ubiquitin-conjugating enzyme]-L-cysteine + N(6)-ubiquitinyl-[acceptor protein]-L-lysine.. It functions in the pathway protein modification; protein ubiquitination. Functionally, E3 ubiquitin-protein ligase. E3 ubiquitin ligases accept ubiquitin from an E2 ubiquitin-conjugating enzyme in the form of a thioester and then directly transfer the ubiquitin to targeted substrates. The protein is Probable E3 ubiquitin-protein ligase MARCHF10 of Homo sapiens (Human).